The primary structure comprises 519 residues: 2-isopropylmalate synthase (519 aa).

The 263-residue stretch at 5–267 (VVIFDTTLRD…STNINYKEIY (263 aa)) folds into the Pyruvate carboxyltransferase domain. Positions 14, 202, 204, and 238 each coordinate Mn(2+). The interval 392–519 (SLKFFSVQSI…LKILKDFKKK (128 aa)) is regulatory domain.

Belongs to the alpha-IPM synthase/homocitrate synthase family. LeuA type 1 subfamily. In terms of assembly, homodimer. Mn(2+) serves as cofactor.

Its subcellular location is the cytoplasm. It carries out the reaction 3-methyl-2-oxobutanoate + acetyl-CoA + H2O = (2S)-2-isopropylmalate + CoA + H(+). It functions in the pathway amino-acid biosynthesis; L-leucine biosynthesis; L-leucine from 3-methyl-2-oxobutanoate: step 1/4. In terms of biological role, catalyzes the condensation of the acetyl group of acetyl-CoA with 3-methyl-2-oxobutanoate (2-ketoisovalerate) to form 3-carboxy-3-hydroxy-4-methylpentanoate (2-isopropylmalate). This is 2-isopropylmalate synthase from Buchnera aphidicola subsp. Acyrthosiphon pisum (strain APS) (Acyrthosiphon pisum symbiotic bacterium).